The chain runs to 392 residues: NADH-quinone oxidoreductase subunit D (392 aa).

The protein belongs to the complex I 49 kDa subunit family. NDH-1 is composed of 14 different subunits. Subunits NuoB, C, D, E, F, and G constitute the peripheral sector of the complex.

It localises to the cell inner membrane. It catalyses the reaction a quinone + NADH + 5 H(+)(in) = a quinol + NAD(+) + 4 H(+)(out). Functionally, NDH-1 shuttles electrons from NADH, via FMN and iron-sulfur (Fe-S) centers, to quinones in the respiratory chain. The immediate electron acceptor for the enzyme in this species is believed to be ubiquinone. Couples the redox reaction to proton translocation (for every two electrons transferred, four hydrogen ions are translocated across the cytoplasmic membrane), and thus conserves the redox energy in a proton gradient. This Parvibaculum lavamentivorans (strain DS-1 / DSM 13023 / NCIMB 13966) protein is NADH-quinone oxidoreductase subunit D.